A 291-amino-acid chain; its full sequence is 4-hydroxy-tetrahydrodipicolinate synthase (291 aa).

Pyruvate is bound at residue T44. Y132 (proton donor/acceptor) is an active-site residue. K160 acts as the Schiff-base intermediate with substrate in catalysis. V202 provides a ligand contact to pyruvate.

The protein belongs to the DapA family. Homotetramer; dimer of dimers.

It localises to the cytoplasm. The enzyme catalyses L-aspartate 4-semialdehyde + pyruvate = (2S,4S)-4-hydroxy-2,3,4,5-tetrahydrodipicolinate + H2O + H(+). It functions in the pathway amino-acid biosynthesis; L-lysine biosynthesis via DAP pathway; (S)-tetrahydrodipicolinate from L-aspartate: step 3/4. Catalyzes the condensation of (S)-aspartate-beta-semialdehyde [(S)-ASA] and pyruvate to 4-hydroxy-tetrahydrodipicolinate (HTPA). The chain is 4-hydroxy-tetrahydrodipicolinate synthase from Clostridium perfringens (strain SM101 / Type A).